The chain runs to 406 residues: S-adenosylmethionine synthase (406 aa).

Histidine 16 provides a ligand contact to ATP. Aspartate 18 lines the Mg(2+) pocket. Glutamate 44 serves as a coordination point for K(+). 2 residues coordinate L-methionine: glutamate 57 and glutamine 100. Residues 100–110 form a flexible loop region; sequence QSVDIAQGVDR. Residues 165–167, aspartate 241, 247–248, alanine 264, and lysine 268 contribute to the ATP site; these read DAK and RK. Position 241 (aspartate 241) interacts with L-methionine. An L-methionine-binding site is contributed by lysine 272.

Belongs to the AdoMet synthase family. Homotetramer; dimer of dimers. Mg(2+) is required as a cofactor. The cofactor is K(+).

The protein resides in the cytoplasm. It catalyses the reaction L-methionine + ATP + H2O = S-adenosyl-L-methionine + phosphate + diphosphate. It participates in amino-acid biosynthesis; S-adenosyl-L-methionine biosynthesis; S-adenosyl-L-methionine from L-methionine: step 1/1. Functionally, catalyzes the formation of S-adenosylmethionine (AdoMet) from methionine and ATP. The overall synthetic reaction is composed of two sequential steps, AdoMet formation and the subsequent tripolyphosphate hydrolysis which occurs prior to release of AdoMet from the enzyme. The protein is S-adenosylmethionine synthase of Chromohalobacter salexigens (strain ATCC BAA-138 / DSM 3043 / CIP 106854 / NCIMB 13768 / 1H11).